The sequence spans 294 residues: Bifunctional protein FolD (294 aa).

NADP(+) is bound by residues 166 to 168 (GRS), Ser-191, and Ile-232.

The protein belongs to the tetrahydrofolate dehydrogenase/cyclohydrolase family. In terms of assembly, homodimer.

It catalyses the reaction (6R)-5,10-methylene-5,6,7,8-tetrahydrofolate + NADP(+) = (6R)-5,10-methenyltetrahydrofolate + NADPH. It carries out the reaction (6R)-5,10-methenyltetrahydrofolate + H2O = (6R)-10-formyltetrahydrofolate + H(+). Its pathway is one-carbon metabolism; tetrahydrofolate interconversion. In terms of biological role, catalyzes the oxidation of 5,10-methylenetetrahydrofolate to 5,10-methenyltetrahydrofolate and then the hydrolysis of 5,10-methenyltetrahydrofolate to 10-formyltetrahydrofolate. This chain is Bifunctional protein FolD, found in Nitrobacter hamburgensis (strain DSM 10229 / NCIMB 13809 / X14).